The sequence spans 177 residues: Probable DNA-directed RNA polymerase subunit delta (177 aa).

One can recognise an HTH HARE-type domain in the interval 14–81 (CSMIEVVHSV…GENRWGLRSW (68 aa)). Positions 90-177 (EILPQPKPKK…ETEEEEEEEL (88 aa)) are disordered. Acidic residues predominate over residues 106–177 (DGFDDYIEED…ETEEEEEEEL (72 aa)).

The protein belongs to the RpoE family. RNAP is composed of a core of 2 alpha, a beta and a beta' subunits. The core is associated with a delta subunit and one of several sigma factors.

Functionally, participates in both the initiation and recycling phases of transcription. In the presence of the delta subunit, RNAP displays an increased specificity of transcription, a decreased affinity for nucleic acids, and an increased efficiency of RNA synthesis because of enhanced recycling. The sequence is that of Probable DNA-directed RNA polymerase subunit delta from Bacillus cereus (strain B4264).